We begin with the raw amino-acid sequence, 417 residues long: Phosphoglycerate kinase (417 aa).

Residues Val-23, Asp-24, Phe-25, Asn-26, Gln-39, Arg-40, Ser-63, His-64, Gly-66, Arg-67, Leu-122, Arg-123, His-170, and Arg-171 each contribute to the (2R)-3-phosphoglycerate site. ADP is bound at residue Gly-214. Gly-214 lines the CDP pocket. Residues Ala-215 and Lys-216 each contribute to the AMP site. Residue Ala-215 participates in ATP binding. Residue Ala-215 participates in Mg(2+) binding. Asp-219 provides a ligand contact to CDP. A Mg(2+)-binding site is contributed by Asp-219. Lys-220 contacts AMP. Lys-220 is a binding site for ATP. Gly-238 is a binding site for ADP. Gly-238 contacts CDP. AMP contacts are provided by Gly-239 and Gly-313. The ATP site is built by Gly-239 and Gly-313. CDP contacts are provided by Gly-338, Ala-340, and Phe-343. Phe-343 serves as a coordination point for ADP. Position 344 (Glu-344) interacts with AMP. Positions 344, 375, and 376 each coordinate ATP. Residue Asp-375 coordinates Mg(2+).

The protein belongs to the phosphoglycerate kinase family. In terms of assembly, monomer. The cofactor is Mg(2+).

The protein resides in the cytoplasm. It is found in the mitochondrion. The enzyme catalyses (2R)-3-phosphoglycerate + ATP = (2R)-3-phospho-glyceroyl phosphate + ADP. The protein operates within carbohydrate degradation; glycolysis; pyruvate from D-glyceraldehyde 3-phosphate: step 2/5. In terms of biological role, catalyzes one of the two ATP producing reactions in the glycolytic pathway via the reversible conversion of 1,3-diphosphoglycerate to 3-phosphoglycerate. Both L- and D- forms of purine and pyrimidine nucleotides can be used as substrates, but the activity is much lower on pyrimidines. Negatively regulates the biosynthesis of acetyl-CoA from pyruvate in the mitochondrion. The protein is Phosphoglycerate kinase (pgk1) of Hypocrea rufa (Trichoderma viride).